The primary structure comprises 131 residues: Spermatocyte protein spe-27 (131 aa).

A signal peptide spans 1-17 (MNKSLIFLLSFAYSCYS).

In terms of biological role, required for spermiogenesis. The sequence is that of Spermatocyte protein spe-27 (spe-27) from Caenorhabditis elegans.